The sequence spans 220 residues: Cobalt-precorrin-8 methylmutase (220 aa).

Residues Ser15 and Arg38 each coordinate substrate. The active-site Proton donor/acceptor is His41.

This sequence belongs to the CobH/CbiC family. In terms of assembly, homodimer.

It carries out the reaction Co-precorrin-8X = cob(II)yrinate. It functions in the pathway cofactor biosynthesis; adenosylcobalamin biosynthesis; cob(II)yrinate a,c-diamide from sirohydrochlorin (anaerobic route): step 9/10. Catalyzes the conversion of cobalt-precorrin-8 to cobyrinate. This Leptospira interrogans serogroup Icterohaemorrhagiae serovar Lai (strain 56601) protein is Cobalt-precorrin-8 methylmutase (cbiC).